The following is a 191-amino-acid chain: Calcium-binding protein L (191 aa).

Gly-2 carries the N-myristoyl glycine lipid modification. EF-hand domains follow at residues 25-59 (EQVSQILKDYQSVNQDSKGLSLEEFKSFFSIRFKD), 60-95 (YDDASILHMFKIFDSDKNGRISFKEFVGALFIITKS), and 96-131 (PVSDKLSFLFDMFDRDLNGYLDLEESYNILKLALNT). 5 residues coordinate Ca(2+): Asp-73, Asp-75, Asn-77, Arg-79, and Glu-84.

It belongs to the recoverin family.

The polypeptide is Calcium-binding protein L (cbpL) (Dictyostelium discoideum (Social amoeba)).